The sequence spans 325 residues: MSTTETTGKSPAKVETGVKLRGAEKVARIPVKVIPTEELPRKPDWIRVRMPASPEVERIKQLLRQHKLHSVCEEASCPNLGECFAGGTATFMIMGDICTRRCPFCDVGHGRPNPLDPDEPKNLAVAVADLRLKYVVITSVDRDDLRDGGAQHFADCLREIRRLSPGTQLETLVPDYRGRMEIALDITAAEPPDVFNHNLETVPRLYKASRPGADFEWSLDLLEAFKKRVPAVPTKSGLMLGLGETDEEVIEVMKRMREHEIDMLTLGQYLQPSRNHLAVQRFVHPDTFAWFAEEGERMGFKNVTSGPLVRSSYHADQQAHGAKGD.

[4Fe-4S] cluster contacts are provided by Cys72, Cys77, Cys83, Cys98, Cys102, Cys105, and Ser312. The Radical SAM core domain maps to 84–301; it reads FAGGTATFMI…AEEGERMGFK (218 aa).

This sequence belongs to the radical SAM superfamily. Lipoyl synthase family. [4Fe-4S] cluster serves as cofactor.

It is found in the cytoplasm. The catalysed reaction is [[Fe-S] cluster scaffold protein carrying a second [4Fe-4S](2+) cluster] + N(6)-octanoyl-L-lysyl-[protein] + 2 oxidized [2Fe-2S]-[ferredoxin] + 2 S-adenosyl-L-methionine + 4 H(+) = [[Fe-S] cluster scaffold protein] + N(6)-[(R)-dihydrolipoyl]-L-lysyl-[protein] + 4 Fe(3+) + 2 hydrogen sulfide + 2 5'-deoxyadenosine + 2 L-methionine + 2 reduced [2Fe-2S]-[ferredoxin]. It participates in protein modification; protein lipoylation via endogenous pathway; protein N(6)-(lipoyl)lysine from octanoyl-[acyl-carrier-protein]: step 2/2. Its function is as follows. Catalyzes the radical-mediated insertion of two sulfur atoms into the C-6 and C-8 positions of the octanoyl moiety bound to the lipoyl domains of lipoate-dependent enzymes, thereby converting the octanoylated domains into lipoylated derivatives. This is Lipoyl synthase from Azotobacter vinelandii (strain DJ / ATCC BAA-1303).